Reading from the N-terminus, the 418-residue chain is Putative ion-transport protein YfeO (418 aa).

Transmembrane regions (helical) follow at residues 9-31 (MLLL…IMVM), 55-77 (SPLW…IRFS), 90-112 (LIGA…LGLA), 122-140 (PIIT…RLLP), 147-169 (WTIL…AALI), 189-211 (PLMA…FSLP), 223-244 (ILSG…VWCL), 259-281 (FVLG…VSLF), 301-323 (YFLL…FRGG), 343-363 (VPAV…VLVV), and 376-398 (VVVP…WLLL).

The protein belongs to the chloride channel (TC 2.A.49) family.

The protein resides in the cell membrane. In Escherichia coli O6:H1 (strain CFT073 / ATCC 700928 / UPEC), this protein is Putative ion-transport protein YfeO (yfeO).